Reading from the N-terminus, the 197-residue chain is Phosphoheptose isomerase (197 aa).

The SIS domain occupies 34-196 (MVQCLLGGNK…DRTLFPQDEQ (163 aa)). 49–51 (NGG) contributes to the substrate binding site. Positions 58 and 62 each coordinate Zn(2+). Substrate is bound by residues glutamate 62, 91–92 (ND), 117–119 (STS), serine 122, and glutamine 172. Zn(2+)-binding residues include glutamine 172 and histidine 180.

Belongs to the SIS family. GmhA subfamily. Homotetramer. Zn(2+) serves as cofactor.

Its subcellular location is the cytoplasm. The enzyme catalyses 2 D-sedoheptulose 7-phosphate = D-glycero-alpha-D-manno-heptose 7-phosphate + D-glycero-beta-D-manno-heptose 7-phosphate. It participates in carbohydrate biosynthesis; D-glycero-D-manno-heptose 7-phosphate biosynthesis; D-glycero-alpha-D-manno-heptose 7-phosphate and D-glycero-beta-D-manno-heptose 7-phosphate from sedoheptulose 7-phosphate: step 1/1. Its function is as follows. Catalyzes the isomerization of sedoheptulose 7-phosphate in D-glycero-D-manno-heptose 7-phosphate. The polypeptide is Phosphoheptose isomerase (Shewanella frigidimarina (strain NCIMB 400)).